A 316-amino-acid chain; its full sequence is Retron Ec73 putative ribosyltransferase/DNA-binding protein (316 aa).

Possible ribosyltransferase/DNA-binding component of antiviral defense system retron Ec73, composed of a non-coding RNA (ncRNA) followed by this protein then a reverse transcriptase (RT). Expression of this retron confers protection against bacteriophages SECphi4, SECphi6, SECphi27 and P1. At multiplicity of infection (MOI) of 0.02 cultures grow normally when infected with SECphi4 without collapsing, at MOI 2 cultures enter growth stasis. The sequence is that of Retron Ec73 putative ribosyltransferase/DNA-binding protein from Escherichia coli.